Here is a 116-residue protein sequence, read N- to C-terminus: Small ribosomal subunit protein uS17 (116 aa).

Belongs to the universal ribosomal protein uS17 family. As to quaternary structure, part of the 30S ribosomal subunit.

Its function is as follows. One of the primary rRNA binding proteins, it binds specifically to the 5'-end of 16S ribosomal RNA. This chain is Small ribosomal subunit protein uS17, found in Pyrococcus horikoshii (strain ATCC 700860 / DSM 12428 / JCM 9974 / NBRC 100139 / OT-3).